Consider the following 603-residue polypeptide: Thread biopolymer filament subunit gamma (603 aa).

A head region spans residues 1–191 (MASHSSVSYR…ENETMEEELK (191 aa)). One can recognise an IF rod domain in the interval 158–476 (VKNILGTLNQ…KLLEGQELMV (319 aa)). Residues 193-227 (LTGGVPMSPDSTVNLENVETQVTEMLTEVSNLTLE) form a coil 1A region. Positions 228 to 240 (RVRLEIDVDHLRA) are linker 1. The segment at 241-341 (TADEIKSKYE…DALNVMREEY (101 aa)) is coil 1B. The segment at 342-362 (QQVVTKNVQEAETYCKMQIDQ) is linker 12. The tract at residues 363–381 (IQGISTQTTEQISILDKEI) is coil 2A. Positions 382–389 (NTLEKELQ) are linker 2. The segment at 390 to 510 (PLNVEYQRLL…SSVGYGASST (121 aa)) is coil 2B. Positions 511–603 (TLGAISGGYS…GHDSTIILQQ (93 aa)) are tail. Positions 562 to 587 (SSSGGHSMYSSSSMKRSSSKSASASA) are enriched in low complexity. The disordered stretch occupies residues 562 to 603 (SSSGGHSMYSSSSMKRSSSKSASASAGGYGTSGHDSTIILQQ).

It belongs to the intermediate filament family. In terms of assembly, coiled-coil heterodimer of an alpha and a gamma subunit. Assemble into 10 nm filaments. Forms a massive, conical, intermediate filament biopolymer of approximately 60 cm.

It localises to the secreted. The protein resides in the extracellular space. In terms of biological role, released extracellularly into seawater and provides physical and biological defense against invasive organism by modulation of the viscoelastic properties of mucus. In Eptatretus stoutii (Pacific hagfish), this protein is Thread biopolymer filament subunit gamma.